The chain runs to 250 residues: DNA repair protein RecO (250 aa).

This sequence belongs to the RecO family.

Its function is as follows. Involved in DNA repair and RecF pathway recombination. The protein is DNA repair protein RecO of Rhodospirillum centenum (strain ATCC 51521 / SW).